The chain runs to 393 residues: Phospholipase A1-II 1 (393 aa).

Positions 200–220 (QVLNEIKRLQDMYEHEETSIT) form a coiled coil. Ser225 functions as the Acyl-ester intermediate in the catalytic mechanism. Residues Ser225, Asp284, and His321 each act as charge relay system in the active site.

This sequence belongs to the AB hydrolase superfamily. Lipase family.

The protein localises to the cytoplasm. Functionally, acylhydrolase that catalyzes the hydrolysis of phospholipids at the sn-1 position. The protein is Phospholipase A1-II 1 of Oryza sativa subsp. indica (Rice).